The following is a 452-amino-acid chain: Exodeoxyribonuclease 7 large subunit (452 aa).

The protein belongs to the XseA family. Heterooligomer composed of large and small subunits.

Its subcellular location is the cytoplasm. The catalysed reaction is Exonucleolytic cleavage in either 5'- to 3'- or 3'- to 5'-direction to yield nucleoside 5'-phosphates.. Bidirectionally degrades single-stranded DNA into large acid-insoluble oligonucleotides, which are then degraded further into small acid-soluble oligonucleotides. The sequence is that of Exodeoxyribonuclease 7 large subunit from Bacillus cereus (strain ATCC 10987 / NRS 248).